The sequence spans 210 residues: Small ribosomal subunit protein uS3 (210 aa).

The region spanning 38–106 is the KH type-2 domain; that stretch reads LRSFLKKRLY…EVYLNIQEVR (69 aa).

It belongs to the universal ribosomal protein uS3 family. As to quaternary structure, part of the 30S ribosomal subunit. Forms a tight complex with proteins S10 and S14.

Functionally, binds the lower part of the 30S subunit head. Binds mRNA in the 70S ribosome, positioning it for translation. This is Small ribosomal subunit protein uS3 from Geotalea uraniireducens (strain Rf4) (Geobacter uraniireducens).